A 313-amino-acid polypeptide reads, in one-letter code: Nucleoside diphosphate-linked moiety X motif 6 (313 aa).

In terms of domain architecture, Nudix hydrolase spans 138-270; it reads THQVGVAGAV…TSRVARLLLY (133 aa).

It belongs to the Nudix hydrolase family. In terms of assembly, monomer and homodimer.

It is found in the cytoplasm. The protein resides in the nucleus. Its subcellular location is the mitochondrion. May contribute to the regulation of cell proliferation. The protein is Nucleoside diphosphate-linked moiety X motif 6 (Nudt6) of Mus musculus (Mouse).